The chain runs to 484 residues: Catalase (484 aa).

Position 53 is a methionine sulfone (methionine 53). Active-site residues include histidine 54 and asparagine 127. Tyrosine 337 is a heme binding site.

Homotetramer. Heme is required as a cofactor. Requires NADP(+) as cofactor.

The protein resides in the cytoplasm. It catalyses the reaction 2 H2O2 = O2 + 2 H2O. Its function is as follows. Decomposes hydrogen peroxide into water and oxygen; serves to protect cells from the toxic effects of hydrogen peroxide. The chain is Catalase (katA) from Proteus mirabilis.